We begin with the raw amino-acid sequence, 849 residues long: Disks large homolog 3 (849 aa).

Residues 32 to 101 (DWQVPDPYGP…GKSTPKLNGS (70 aa)) form a disordered region. The segment covering 41–53 (PSGGNGASSGYGG) has biased composition (gly residues). The segment covering 57–69 (QTLPSQAGATPTP) has biased composition (polar residues). PDZ domains lie at 149 to 235 (EIVL…VRRR), 244 to 330 (EVNL…VAKP), and 404 to 484 (KIIL…AQYR). Residue Ser-157 is modified to Phosphoserine. The region spanning 519-589 (KRSLYVRALF…PSKKRVEKKE (71 aa)) is the SH3 domain. The Guanylate kinase-like domain occupies 659–834 (ARPVIILGPM…IYNKIKQIIE (176 aa)). Tyr-705 is subject to Phosphotyrosine.

The protein belongs to the MAGUK family. In terms of assembly, interacts through its PDZ domains with NETO1, GRIN2B, SYNGAP1 and APC. Interacts through its first two PDZ domains with ERBB4. Interacts through its third PDZ domain with NLGN1, and probably with NLGN2 and NLGN3. Interacts through its guanylate kinase-like domain with DLGAP1, DLGAP2, DLGAP3 and DLGAP4. Interacts with FRMPD4 (via C-terminus). Interacts with LRFN1, LRFN2 and LRFN4. Interacts with FLTP. Interacts with GPR85. Interacts with DGKI (via PDZ-binding motif).

In terms of biological role, required for learning most likely through its role in synaptic plasticity following NMDA receptor signaling. The protein is Disks large homolog 3 (Dlg3) of Mus musculus (Mouse).